A 133-amino-acid polypeptide reads, in one-letter code: uncharacterized protein (133 aa).

The segment at 44–79 is disordered; it reads VENQLASSKTEEQTLKISKKSNLNPAQKSSTFGLEN. Positions 63 to 79 are enriched in polar residues; that stretch reads KSNLNPAQKSSTFGLEN.

The protein localises to the plastid. Its subcellular location is the chloroplast. This is an uncharacterized protein from Chlorella vulgaris (Green alga).